Reading from the N-terminus, the 429-residue chain is S-adenosylmethionine synthase (429 aa).

Glutamate 9 contributes to the Mg(2+) binding site. Residue histidine 15 participates in ATP binding. Glutamate 43 contacts K(+). Glutamate 56 and glutamine 99 together coordinate L-methionine. Residues 167-169 (DGK), 235-238 (SGRF), aspartate 246, 252-253 (RK), alanine 269, lysine 273, and lysine 277 contribute to the ATP site. Residue aspartate 246 participates in L-methionine binding. Lysine 277 provides a ligand contact to L-methionine.

It belongs to the AdoMet synthase family. In terms of assembly, homotetramer. It depends on Mn(2+) as a cofactor. Mg(2+) is required as a cofactor. Co(2+) serves as cofactor. The cofactor is K(+).

It localises to the cytoplasm. It carries out the reaction L-methionine + ATP + H2O = S-adenosyl-L-methionine + phosphate + diphosphate. It participates in amino-acid biosynthesis; S-adenosyl-L-methionine biosynthesis; S-adenosyl-L-methionine from L-methionine: step 1/1. Functionally, catalyzes the formation of S-adenosylmethionine from methionine and ATP. The reaction comprises two steps that are both catalyzed by the same enzyme: formation of S-adenosylmethionine (AdoMet) and triphosphate, and subsequent hydrolysis of the triphosphate. This Carica papaya (Papaya) protein is S-adenosylmethionine synthase (SAMS).